The sequence spans 349 residues: Glycosyltransferase 8 domain-containing protein 2 (349 aa).

The Cytoplasmic segment spans residues 1 to 6 (MALLRK). The chain crosses the membrane as a helical; Signal-anchor for type II membrane protein span at residues 7–24 (INQVLLFLLIVTLCVILY). Residues 25–349 (KKVHKGTVPK…AGIFKLNHHS (325 aa)) are Lumenal-facing. Asn-234 carries N-linked (GlcNAc...) asparagine glycosylation.

The protein belongs to the glycosyltransferase 8 family.

It is found in the membrane. The polypeptide is Glycosyltransferase 8 domain-containing protein 2 (GLT8D2) (Homo sapiens (Human)).